The primary structure comprises 137 residues: MIWKRHLTLDELNATSDNTMVAHLGIVYTRLGDDVLEAEMPVDTRTHQPFGLLHGGASAALAETLGSMAGFMMTRDGQCVVGTELNATHHRPMSEGKVRGVCQPLHLGRQNQSWEIIVFDEQGRRCCTCRLGTAVLG.

Residue Glu63 is the Nucleophile or proton acceptor of the active site.

This sequence belongs to the thioesterase PaaI family. Homotetramer. Dimer of dimers. Interacts specifically with the aryl carrier protein (ArCP) domain of EntB.

It is found in the cytoplasm. It participates in siderophore biosynthesis; enterobactin biosynthesis. Its function is as follows. Required for optimal enterobactin synthesis. Acts as a proofreading enzyme that prevents EntB misacylation by hydrolyzing the thioester bound existing between EntB and wrongly charged molecules. The chain is Proofreading thioesterase EntH from Shigella sonnei (strain Ss046).